Reading from the N-terminus, the 466-residue chain is Putative multidrug resistance protein MdtD (466 aa).

Transmembrane regions (helical) follow at residues 11-31, 48-68, 71-91, 105-125, 137-157, 164-184, 194-214, 218-238, 262-282, 286-306, 328-347, 351-370, 403-423, and 429-449; these read LWIV…VNTA, SVIV…GWLA, IGVK…SLLC, VIQG…VMKI, FVTL…GFLV, WIFL…WFLM, FDIS…LALD, SLGI…IALL, FSIG…LPFM, FLQL…VPMV, VLIV…ALVA, WIWM…AIRF, LGVS…MAAG, and MVFI…ALIF.

This sequence belongs to the major facilitator superfamily. TCR/Tet family.

The protein localises to the cell inner membrane. This is Putative multidrug resistance protein MdtD from Pectobacterium carotovorum subsp. carotovorum (strain PC1).